The sequence spans 355 residues: UDP-N-acetylglucosamine--N-acetylmuramyl-(pentapeptide) pyrophosphoryl-undecaprenol N-acetylglucosamine transferase (355 aa).

Residues 14–16 (TGG), Asn126, Arg162, Ser190, Ile243, 262–267 (ALTVSE), and Gln287 each bind UDP-N-acetyl-alpha-D-glucosamine.

This sequence belongs to the glycosyltransferase 28 family. MurG subfamily.

Its subcellular location is the cell inner membrane. The catalysed reaction is di-trans,octa-cis-undecaprenyl diphospho-N-acetyl-alpha-D-muramoyl-L-alanyl-D-glutamyl-meso-2,6-diaminopimeloyl-D-alanyl-D-alanine + UDP-N-acetyl-alpha-D-glucosamine = di-trans,octa-cis-undecaprenyl diphospho-[N-acetyl-alpha-D-glucosaminyl-(1-&gt;4)]-N-acetyl-alpha-D-muramoyl-L-alanyl-D-glutamyl-meso-2,6-diaminopimeloyl-D-alanyl-D-alanine + UDP + H(+). It functions in the pathway cell wall biogenesis; peptidoglycan biosynthesis. In terms of biological role, cell wall formation. Catalyzes the transfer of a GlcNAc subunit on undecaprenyl-pyrophosphoryl-MurNAc-pentapeptide (lipid intermediate I) to form undecaprenyl-pyrophosphoryl-MurNAc-(pentapeptide)GlcNAc (lipid intermediate II). In Vibrio parahaemolyticus serotype O3:K6 (strain RIMD 2210633), this protein is UDP-N-acetylglucosamine--N-acetylmuramyl-(pentapeptide) pyrophosphoryl-undecaprenol N-acetylglucosamine transferase.